Reading from the N-terminus, the 88-residue chain is Large ribosomal subunit protein eL15 (88 aa).

It belongs to the eukaryotic ribosomal protein eL15 family.

This chain is Large ribosomal subunit protein eL15 (RPL15), found in Brassica napus (Rape).